The following is a 256-amino-acid chain: MPCSRALILGVLALNTMLSLCGGEDDIEADHVGFYGTTVYQSPGDIGQYTHEFDGDELFYVDLDKKKTVWRLPEFGQLILFEPQGGLQNIAAEKHNLGILTKRSNFTPATNEAPQATVFPKSPVLLGQPNTLICFVDNIFPPVINITWLRNSKSVTDGVYETSFLVNRDHSFHKLSYLTFIPSDDDIYDCKVEHWGLEEPVLKHWEPEIPAPMSELTETVVCALGLSVGLVGIVVGTIFIIQGLRSGGTSRHPGPL.

The first 23 residues, 1-23 (MPCSRALILGVLALNTMLSLCGG), serve as a signal peptide directing secretion. The segment at 24–111 (EDDIEADHVG…KRSNFTPATN (88 aa)) is alpha-1. At 24 to 218 (EDDIEADHVG…IPAPMSELTE (195 aa)) the chain is on the extracellular side. An alpha-2 region spans residues 112–205 (EAPQATVFPK…GLEEPVLKHW (94 aa)). Positions 114-206 (PQATVFPKSP…LEEPVLKHWE (93 aa)) constitute an Ig-like C1-type domain. Cys-134 and Cys-190 form a disulfide bridge. An N-linked (GlcNAc...) asparagine glycan is attached at Asn-145. The tract at residues 206–218 (EPEIPAPMSELTE) is connecting peptide. Residues 219–244 (TVVCALGLSVGLVGIVVGTIFIIQGL) form a helical membrane-spanning segment. At 245 to 256 (RSGGTSRHPGPL) the chain is on the cytoplasmic side.

This sequence belongs to the MHC class II family.

The protein resides in the membrane. This Mus musculus (Mouse) protein is H-2 class II histocompatibility antigen, A-D alpha chain (H2-Aa).